Reading from the N-terminus, the 62-residue chain is Conotoxin TsMLCL-02 (62 aa).

The signal sequence occupies residues 1–19 (MLCLPVFIILLLLASPAAP). Residues 20 to 54 (NPLERRIQSDLIRAALEDADMKTEKGILSSIMGTL) constitute a propeptide that is removed on maturation.

The protein belongs to the conotoxin T superfamily. Expressed by the venom duct.

It is found in the secreted. This is Conotoxin TsMLCL-02 from Conus tessulatus (Tessellate cone).